The primary structure comprises 816 residues: Nicotine 6-hydroxylase large subunit (816 aa).

E745 contacts Mo-molybdopterin cytosine dinucleotide.

It belongs to the xanthine dehydrogenase family. As to quaternary structure, heterotrimer composed of a large subunit (NdhL), a medium subunit (NdhM) and a small subunit (NdhS). It depends on Mo-molybdopterin cytosine dinucleotide as a cofactor.

Its subcellular location is the cytoplasm. It catalyses the reaction (R)-nicotine + A + H2O = (R)-6-hydroxynicotine + AH2. It carries out the reaction (S)-nicotine + A + H2O = (S)-6-hydroxynicotine + AH2. The protein operates within alkaloid degradation; nicotine degradation; 6-hydroxypseudooxynicotine from nicotine (R-isomer route): step 1/2. It functions in the pathway alkaloid degradation; nicotine degradation; 6-hydroxypseudooxynicotine from nicotine (S-isomer route): step 1/2. Nicotine dehydrogenase activity is inhibited by tungsten. Component of the nicotine 6-hydroxylase, which is involved in the degradation of nicotine. Catalyzes the hydroxylation of the pyridine ring at C6 to form 6-hydroxynicotine. Can use both L-nicotine and D-nicotine. The protein is Nicotine 6-hydroxylase large subunit of Paenarthrobacter nicotinovorans (Arthrobacter nicotinovorans).